We begin with the raw amino-acid sequence, 734 residues long: Myb-like protein J (734 aa).

Disordered stretches follow at residues 1–35, 128–196, and 221–378; these read MPNN…FKSN, QKDQ…PTMM, and SPIS…LKQG. The span at 131–142 shows a compositional bias: basic and acidic residues; sequence QQQKEQQKEQQK. Low complexity predominate over residues 164–173; that stretch reads TTTTTTTTTT. Residues 174-196 are compositionally biased toward polar residues; that stretch reads AVEQQGAEQQDTNLNSTSSPTMM. Residues 221–230 are compositionally biased toward low complexity; it reads SPISSSLNNS. Residues 231–257 are compositionally biased toward polar residues; sequence QDNTKPVSPDNIENTSNPMDTSSSNGK. The segment covering 258 to 372 has biased composition (low complexity); it reads TPTITPIVTP…GGKTNPTGKK (115 aa). In terms of domain architecture, HTH myb-type spans 371–426; the sequence is KKTSLKQGWTKEEHIRFLNGIQIHGKGAWKEIAQFVGTRTPTQIQSHAQKYYLRQK. Residues 399–422 constitute a DNA-binding region (H-T-H motif); that stretch reads WKEIAQFVGTRTPTQIQSHAQKYY. A compositionally biased stretch (low complexity) spans 445–454; it reads DDNLNNSNKN. The disordered stretch occupies residues 445-623; that stretch reads DDNLNNSNKN…GNILRHQNSH (179 aa). Residues 455–468 show a composition bias toward basic and acidic residues; that stretch reads NVDKNKQDDKEKKT. Residues 469 to 478 show a composition bias toward basic residues; that stretch reads QKTKKTKSKS. 2 stretches are compositionally biased toward low complexity: residues 489-543 and 574-615; these read QQQQ…SSQT and NNNN…NEGN.

Its subcellular location is the nucleus. This Dictyostelium discoideum (Social amoeba) protein is Myb-like protein J (mybJ).